Here is a 146-residue protein sequence, read N- to C-terminus: VHLTADEKVSLSSLWGKVNPDELGGEALGRLLLVYPWTQRFFDSFGDLSSAVAVMGNAKVKAHGKKVLDSFSDGLKHLDNLKGTFASLSELHCDKLHVDPENFKLLGNVLVLVLAHHLGKEFTPQAQGTFQKVVAGVANALAHKYH.

V1 carries the N-acetylvaline modification. A Globin domain is found at 2-146 (HLTADEKVSL…VANALAHKYH (145 aa)). S44 is subject to Phosphoserine. Position 59 is an N6-acetyllysine (K59). H63 is a heme b binding site. K82 carries the N6-acetyllysine modification. H92 provides a ligand contact to heme b. C93 bears the S-nitrosocysteine mark. K144 carries the N6-acetyllysine modification.

This sequence belongs to the globin family. As to quaternary structure, heterotetramer of two alpha chains and two beta chains. In terms of tissue distribution, red blood cells.

In terms of biological role, involved in oxygen transport from the lung to the various peripheral tissues. This is Hemoglobin subunit beta from Tamias striatus (Eastern chipmunk).